The primary structure comprises 424 residues: UDP-N-acetylglucosamine 1-carboxyvinyltransferase (424 aa).

Position 22–23 (22–23) interacts with phosphoenolpyruvate; the sequence is KN. Arg98 contributes to the UDP-N-acetyl-alpha-D-glucosamine binding site. The Proton donor role is filled by Cys122. A 2-(S-cysteinyl)pyruvic acid O-phosphothioketal modification is found at Cys122. Residues 127 to 131, Asp312, and Ile334 contribute to the UDP-N-acetyl-alpha-D-glucosamine site; that span reads RPVDQ.

This sequence belongs to the EPSP synthase family. MurA subfamily.

It localises to the cytoplasm. It catalyses the reaction phosphoenolpyruvate + UDP-N-acetyl-alpha-D-glucosamine = UDP-N-acetyl-3-O-(1-carboxyvinyl)-alpha-D-glucosamine + phosphate. It functions in the pathway cell wall biogenesis; peptidoglycan biosynthesis. In terms of biological role, cell wall formation. Adds enolpyruvyl to UDP-N-acetylglucosamine. This is UDP-N-acetylglucosamine 1-carboxyvinyltransferase from Xanthomonas campestris pv. campestris (strain 8004).